Reading from the N-terminus, the 406-residue chain is Tyrosine--tRNA ligase (406 aa).

Tyr34 is a binding site for L-tyrosine. A 'HIGH' region motif is present at residues 39–48 (PTADSLHVGH). Positions 167 and 171 each coordinate L-tyrosine. The short motif at 227–231 (KMGKT) is the 'KMSKS' region element. Lys230 serves as a coordination point for ATP. An S4 RNA-binding domain is found at 339-404 (RKIVDVLFEA…GKKEYHRLLV (66 aa)).

This sequence belongs to the class-I aminoacyl-tRNA synthetase family. TyrS type 1 subfamily. As to quaternary structure, homodimer.

It localises to the cytoplasm. It carries out the reaction tRNA(Tyr) + L-tyrosine + ATP = L-tyrosyl-tRNA(Tyr) + AMP + diphosphate + H(+). Its function is as follows. Catalyzes the attachment of tyrosine to tRNA(Tyr) in a two-step reaction: tyrosine is first activated by ATP to form Tyr-AMP and then transferred to the acceptor end of tRNA(Tyr). The sequence is that of Tyrosine--tRNA ligase from Caldanaerobacter subterraneus subsp. tengcongensis (strain DSM 15242 / JCM 11007 / NBRC 100824 / MB4) (Thermoanaerobacter tengcongensis).